A 676-amino-acid polypeptide reads, in one-letter code: Transcription factor RLM1 (676 aa).

In terms of domain architecture, MADS-box spans 3-57 (RRKIEIQRISDDRNRAVTFIKRKAGLFKKAHELSVLCQVDIAVIILGSNNTFYEF). A DNA-binding region (mef2-type) is located at residues 58-87 (SSVDTNDLIYHYQNDKNLLHEVKDPSDYGD). Polar residues predominate over residues 103–120 (SSMSNKPSKSNVKGMNQS). The disordered stretch occupies residues 103–156 (SSMSNKPSKSNVKGMNQSENDDDENNDEDDDDHGNFERNSNMHSNKKASDKNIP). Position 120 is a phosphoserine (serine 120). A compositionally biased stretch (acidic residues) spans 121 to 134 (ENDDDENNDEDDDD). Phosphoserine is present on serine 164. The segment covering 173–183 (DGSEQNKRHPE) has biased composition (basic and acidic residues). Disordered stretches follow at residues 173 to 192 (DGSEQNKRHPENALPPLQHL), 202 to 318 (ISRT…RRKL), 330 to 424 (NNNF…PFGS), 472 to 514 (KKQS…VHDL), and 532 to 631 (MGPN…NSST). Over residues 260-276 (ISPNKFSKPFTNASSRT) the composition is skewed to polar residues. A compositionally biased stretch (low complexity) spans 284–295 (NNSGSNNNDNSN). Residues 296–312 (YTQSPSNSLEDSIQQTV) are compositionally biased toward polar residues. 3 stretches are compositionally biased toward low complexity: residues 334-359 (SSNSAIPSEPSSASSTSANGNSMGSS), 368-381 (SRSSKISPLSASAS), and 399-417 (PNANAPNGSNNGNGSNNNN). 2 positions are modified to phosphoserine: serine 374 and serine 377. Polar residues predominate over residues 472–506 (KKQSQTVPLTTTLTGRPPSTFSGPETSNGPPTGSL). Residues 539-604 (PGNTNNPGTF…NSNNSYYSNN (66 aa)) show a composition bias toward low complexity. Positions 621–631 (GDSNNQSNSST) are enriched in polar residues.

It belongs to the MEF2 family. As to quaternary structure, can heterodimerize with SPM1. Interacts with KDX1 and SLT2. Phosphorylated by SLT2.

The protein resides in the nucleus. Its function is as follows. May function as a transcription factor downstream of MPK1 that is subject to activation by the MPK1 mitogen-activated protein kinase pathway. Binds to the DNA sequence 5'-CTA[TA](4)TAG-3'. At least some RML1 target genes are involved in cell wall biosynthesis. In Saccharomyces cerevisiae (strain ATCC 204508 / S288c) (Baker's yeast), this protein is Transcription factor RLM1 (RLM1).